The following is a 407-amino-acid chain: MQTLSAPDISSSKPAALTEATIVRRKTRPVPVGSITIGGGNPVVVQSMINEDTLDIEGSVAAIRRLHEIGCEIVRVTVPSMAHAKAMAEIRAKLHRTYKPVPLVADVHHNGLKIALEVANHVDNVRINPGLYVFEKPKADRTEYTQAEFDEIGAKIRETLEPLVLSLKTQNKSMRIGVNHGSLAERMLFTYGDTPEGMVESALEFIRICESLGYYHLEISLKASRVPVMLAANRLMVQRMDELGMDYPLHLGVTEAGDGEYGRIKSTAGIGTLLAEGIGDTIRVSLTEAPEKEIPVCYSILQALGLRKTMVEYVACPSCGRTLFNLEEVLHKVREATKHLTGLDIAVMGCIVNGPGEMADADYGYVGKQAGHISLYRGREEVKKVPEDQGVEELINLIKADGRWVDP.

[4Fe-4S] cluster is bound by residues cysteine 316, cysteine 319, cysteine 350, and glutamate 357.

It belongs to the IspG family. [4Fe-4S] cluster is required as a cofactor.

The catalysed reaction is (2E)-4-hydroxy-3-methylbut-2-enyl diphosphate + 2 oxidized [2Fe-2S]-[ferredoxin] + H2O = 2-C-methyl-D-erythritol 2,4-cyclic diphosphate + 2 reduced [2Fe-2S]-[ferredoxin] + H(+). Its pathway is isoprenoid biosynthesis; isopentenyl diphosphate biosynthesis via DXP pathway; isopentenyl diphosphate from 1-deoxy-D-xylulose 5-phosphate: step 5/6. Converts 2C-methyl-D-erythritol 2,4-cyclodiphosphate (ME-2,4cPP) into 1-hydroxy-2-methyl-2-(E)-butenyl 4-diphosphate. The polypeptide is 4-hydroxy-3-methylbut-2-en-1-yl diphosphate synthase (ferredoxin) (Cyanothece sp. (strain PCC 7425 / ATCC 29141)).